We begin with the raw amino-acid sequence, 544 residues long: MAITGGMQSSDMVLLLWITVICACCSFVDSSRSHRQLITSPSTTGVCRYGIKAECCYGWKRNRKGQCEAVCEQGCKHGECVGPNKCKCFPGFTGKNCNQDLNECGLKPRPCEHRCMNTHGSYKCYCLNGYMLMPDGSCSNSRTCAMANCQYGCEQVKGDIRCLCPSGGLQLGPDGRTCIDIDECAVGKASCPINRRCVNTFGSYYCKCQIGYELKYVNGRYDCIDINECLLNTHKCSINADCLNTQGSFKCRCKHGFKGNGQECSAVFNKPVKESPKFGGSVKDAIKKLLAHKNSLNRYNDIKNVIPETFITPPPKNRLQPFDYEDGVYIGGNDNDEEEGEIEEEEEEELDEEDEENVIEEEKLLRGDVFARQVKRAAVLSSQPISNTDPVLKSDEVLVDCRFDQGTCEWKQDSKDDFDWKHAERHNGNGYYMSVPASTSQKKGIGRLKLQLTKIYYKYCLMFIYRLAGERVGKLRVYIDENINPIWEETKNRDEGWRTAKIEIQESSTRKSSSITFEAVRGKDEAGIMALDNVFLSSGPCSDD.

The N-terminal stretch at 1-30 (MAITGGMQSSDMVLLLWITVICACCSFVDS) is a signal peptide. Residues 63 to 98 (RKGQCEAVCEQGCKHGECVGPNKCKCFPGFTGKNCN) form the EGF-like 1 domain. Intrachain disulfides connect cysteine 67–cysteine 80, cysteine 71–cysteine 86, cysteine 88–cysteine 97, cysteine 104–cysteine 115, cysteine 111–cysteine 124, and cysteine 126–cysteine 138. The region spanning 100 to 139 (DLNECGLKPRPCEHRCMNTHGSYKCYCLNGYMLMPDGSCS) is the EGF-like 2; calcium-binding domain. An EGF-like 3 domain is found at 144–178 (CAMANCQYGCEQVKGDIRCLCPSGGLQLGPDGRTC). The EGF-like 4; calcium-binding domain maps to 180-218 (DIDECAVGKASCPINRRCVNTFGSYYCKCQIGYELKYVN). Disulfide bonds link cysteine 184–cysteine 197, cysteine 191–cysteine 206, cysteine 229–cysteine 242, cysteine 236–cysteine 251, and cysteine 253–cysteine 264. The EGF-like 5; calcium-binding domain maps to 225–265 (DINECLLNTHKCSINADCLNTQGSFKCRCKHGFKGNGQECS). The segment at 332 to 357 (GNDNDEEEGEIEEEEEEELDEEDEEN) is disordered. Residues 333 to 367 (NDNDEEEGEIEEEEEEELDEEDEENVIEEEKLLRG) are a coiled coil. Residues 334–357 (DNDEEEGEIEEEEEEELDEEDEEN) show a composition bias toward acidic residues. Residues 399–543 (VDCRFDQGTC…VFLSSGPCSD (145 aa)) enclose the MAM domain.

The protein belongs to the nephronectin family.

It localises to the secreted. It is found in the extracellular space. Its subcellular location is the extracellular matrix. The protein resides in the basement membrane. Functionally, may play a role in organ morphogenesis. Promotes matrix assembly. In Xenopus laevis (African clawed frog), this protein is Epidermal growth factor-like protein 6 (egfl6).